Consider the following 384-residue polypeptide: 8-amino-7-oxononanoate synthase (384 aa).

Arg21 is a substrate binding site. 108–109 (GF) is a pyridoxal 5'-phosphate binding site. A substrate-binding site is contributed by His133. The pyridoxal 5'-phosphate site is built by Ser179, His207, and Thr233. The residue at position 236 (Lys236) is an N6-(pyridoxal phosphate)lysine. Thr352 provides a ligand contact to substrate.

Belongs to the class-II pyridoxal-phosphate-dependent aminotransferase family. BioF subfamily. Homodimer. Requires pyridoxal 5'-phosphate as cofactor.

The catalysed reaction is 6-carboxyhexanoyl-[ACP] + L-alanine + H(+) = (8S)-8-amino-7-oxononanoate + holo-[ACP] + CO2. It participates in cofactor biosynthesis; biotin biosynthesis. In terms of biological role, catalyzes the decarboxylative condensation of pimeloyl-[acyl-carrier protein] and L-alanine to produce 8-amino-7-oxononanoate (AON), [acyl-carrier protein], and carbon dioxide. The sequence is that of 8-amino-7-oxononanoate synthase from Shigella boydii serotype 18 (strain CDC 3083-94 / BS512).